The chain runs to 173 residues: Ribonuclease P/MRP protein subunit POP5 (173 aa).

This sequence belongs to the eukaryotic/archaeal RNase P protein component 2 family. In terms of assembly, component of nuclear RNase P and RNase MRP complexes. RNase P consists of an RNA moiety and at least 9 protein subunits including POP1, POP3, POP4, POP5, POP6, POP7, POP8, RPP1 and RPR2. RNase MRP complex consists of an RNA moiety and at least 10 protein subunits including POP1, POP3, POP4, POP5, POP6, POP7, POP8, RMP1, RPP1 and SNM1, many of which are shared with the RNase P complex.

The protein localises to the cytoplasm. The protein resides in the nucleus. The catalysed reaction is Endonucleolytic cleavage of RNA, removing 5'-extranucleotides from tRNA precursor.. Its function is as follows. Component of ribonuclease P, a protein complex that generates mature tRNA molecules by cleaving their 5'-ends. Also a component of RNase MRP, which cleaves pre-rRNA sequences. This Saccharomyces cerevisiae (strain ATCC 204508 / S288c) (Baker's yeast) protein is Ribonuclease P/MRP protein subunit POP5 (POP5).